Here is a 968-residue protein sequence, read N- to C-terminus: RNA polymerase-associated protein RapA (968 aa).

In terms of domain architecture, Helicase ATP-binding spans aspartate 164–asparagine 334. An ATP-binding site is contributed by aspartate 177 to threonine 184. A DEAH box motif is present at residues aspartate 280 to histidine 283. The Helicase C-terminal domain occupies arginine 490–glycine 662.

It belongs to the SNF2/RAD54 helicase family. RapA subfamily. As to quaternary structure, interacts with the RNAP. Has a higher affinity for the core RNAP than for the holoenzyme. Its ATPase activity is stimulated by binding to RNAP.

Functionally, transcription regulator that activates transcription by stimulating RNA polymerase (RNAP) recycling in case of stress conditions such as supercoiled DNA or high salt concentrations. Probably acts by releasing the RNAP, when it is trapped or immobilized on tightly supercoiled DNA. Does not activate transcription on linear DNA. Probably not involved in DNA repair. The polypeptide is RNA polymerase-associated protein RapA (Escherichia coli O9:H4 (strain HS)).